The sequence spans 286 residues: Protein GrpE (286 aa).

2 disordered regions span residues 1 to 51 (MSED…ETTA) and 260 to 286 (VAAPKEPDSSETESTSESVSDVQQPTT). 2 stretches are compositionally biased toward low complexity: residues 39–50 (QPSSTPQTPETT) and 271–286 (TESTSESVSDVQQPTT).

This sequence belongs to the GrpE family. As to quaternary structure, homodimer.

The protein localises to the cytoplasm. Its function is as follows. Participates actively in the response to hyperosmotic and heat shock by preventing the aggregation of stress-denatured proteins, in association with DnaK and GrpE. It is the nucleotide exchange factor for DnaK and may function as a thermosensor. Unfolded proteins bind initially to DnaJ; upon interaction with the DnaJ-bound protein, DnaK hydrolyzes its bound ATP, resulting in the formation of a stable complex. GrpE releases ADP from DnaK; ATP binding to DnaK triggers the release of the substrate protein, thus completing the reaction cycle. Several rounds of ATP-dependent interactions between DnaJ, DnaK and GrpE are required for fully efficient folding. This is Protein GrpE from Gloeothece citriformis (strain PCC 7424) (Cyanothece sp. (strain PCC 7424)).